A 194-amino-acid chain; its full sequence is Small ribosomal subunit protein eS7 (194 aa).

This sequence belongs to the eukaryotic ribosomal protein eS7 family.

This chain is Small ribosomal subunit protein eS7 (RpS7), found in Drosophila yakuba (Fruit fly).